Reading from the N-terminus, the 21-residue chain is S-layer protein 2 (21 aa).

It is found in the secreted. It localises to the cell wall. The protein resides in the S-layer. Functionally, the S-layer is a paracrystalline mono-layered assembly of proteins which coat the surface of bacteria. This is S-layer protein 2 from Bacillus thuringiensis subsp. konkukian.